The primary structure comprises 156 residues: Small ribosomal subunit protein uS15 (156 aa).

Residues 1–67 (MARMHTRRRG…GVQGTPIPDV (67 aa)) are disordered. The span at 10-19 (GSSDSDKPAA) shows a compositional bias: basic and acidic residues. Residues 21-32 (EPPEWSDVDEDA) are compositionally biased toward acidic residues.

Belongs to the universal ribosomal protein uS15 family. In terms of assembly, part of the 30S ribosomal subunit.

The chain is Small ribosomal subunit protein uS15 from Haloarcula marismortui (strain ATCC 43049 / DSM 3752 / JCM 8966 / VKM B-1809) (Halobacterium marismortui).